The chain runs to 129 residues: Small ribosomal subunit protein bS6 (129 aa).

It belongs to the bacterial ribosomal protein bS6 family.

Functionally, binds together with bS18 to 16S ribosomal RNA. The sequence is that of Small ribosomal subunit protein bS6 from Pelobacter propionicus (strain DSM 2379 / NBRC 103807 / OttBd1).